We begin with the raw amino-acid sequence, 353 residues long: UDP-N-acetylglucosamine--N-acetylmuramyl-(pentapeptide) pyrophosphoryl-undecaprenol N-acetylglucosamine transferase (353 aa).

UDP-N-acetyl-alpha-D-glucosamine is bound by residues 10–12, Asn124, Ser183, and Gln283; that span reads TGG.

The protein belongs to the glycosyltransferase 28 family. MurG subfamily.

The protein localises to the cell inner membrane. It catalyses the reaction di-trans,octa-cis-undecaprenyl diphospho-N-acetyl-alpha-D-muramoyl-L-alanyl-D-glutamyl-meso-2,6-diaminopimeloyl-D-alanyl-D-alanine + UDP-N-acetyl-alpha-D-glucosamine = di-trans,octa-cis-undecaprenyl diphospho-[N-acetyl-alpha-D-glucosaminyl-(1-&gt;4)]-N-acetyl-alpha-D-muramoyl-L-alanyl-D-glutamyl-meso-2,6-diaminopimeloyl-D-alanyl-D-alanine + UDP + H(+). Its pathway is cell wall biogenesis; peptidoglycan biosynthesis. Cell wall formation. Catalyzes the transfer of a GlcNAc subunit on undecaprenyl-pyrophosphoryl-MurNAc-pentapeptide (lipid intermediate I) to form undecaprenyl-pyrophosphoryl-MurNAc-(pentapeptide)GlcNAc (lipid intermediate II). This is UDP-N-acetylglucosamine--N-acetylmuramyl-(pentapeptide) pyrophosphoryl-undecaprenol N-acetylglucosamine transferase from Helicobacter pylori (strain Shi470).